The primary structure comprises 634 residues: Extracellular metalloproteinase mep (634 aa).

The first 18 residues, 1 to 18 (MRGLLLAGALALPASVFA), serve as a signal peptide directing secretion. Residues 19–245 (HPAHQSYGLN…IHGVVDYVAE (227 aa)) constitute a propeptide that is removed on maturation. N286 is a glycosylation site (N-linked (GlcNAc...) asparagine). H429 contacts Zn(2+). E430 is a catalytic residue. H433 lines the Zn(2+) pocket.

Belongs to the peptidase M36 family. Requires Zn(2+) as cofactor.

It is found in the secreted. In terms of biological role, secreted metalloproteinase that allows assimilation of proteinaceous substrates and probably acts as a virulence factor. This Aspergillus fumigatus (strain CBS 144.89 / FGSC A1163 / CEA10) (Neosartorya fumigata) protein is Extracellular metalloproteinase mep (mep).